The primary structure comprises 500 residues: Lycopene beta cyclase, chloroplastic (500 aa).

The transit peptide at Met1–Gly81 directs the protein to the chloroplast. Leu86–Pro114 is an NAD(+) binding site.

The protein belongs to the lycopene cyclase family.

The protein localises to the plastid. It is found in the chloroplast. It carries out the reaction a carotenoid psi-end group = a carotenoid beta-end derivative. The protein operates within carotenoid biosynthesis; beta-carotene biosynthesis. It participates in carotenoid biosynthesis; beta-zeacarotene biosynthesis. Its function is as follows. Catalyzes the double cyclization reaction which converts lycopene to beta-carotene and neurosporene to beta-zeacarotene. This is Lycopene beta cyclase, chloroplastic (LCY1) from Solanum lycopersicum (Tomato).